The sequence spans 60 residues: Large ribosomal subunit protein uL30 (60 aa).

Belongs to the universal ribosomal protein uL30 family. In terms of assembly, part of the 50S ribosomal subunit.

This is Large ribosomal subunit protein uL30 from Alcanivorax borkumensis (strain ATCC 700651 / DSM 11573 / NCIMB 13689 / SK2).